A 194-amino-acid polypeptide reads, in one-letter code: UPF0301 protein FTH_1193 (194 aa).

This sequence belongs to the UPF0301 (AlgH) family.

In Francisella tularensis subsp. holarctica (strain OSU18), this protein is UPF0301 protein FTH_1193.